The following is a 194-amino-acid chain: Imidazoleglycerol-phosphate dehydratase (194 aa).

It belongs to the imidazoleglycerol-phosphate dehydratase family.

The protein resides in the cytoplasm. The catalysed reaction is D-erythro-1-(imidazol-4-yl)glycerol 3-phosphate = 3-(imidazol-4-yl)-2-oxopropyl phosphate + H2O. Its pathway is amino-acid biosynthesis; L-histidine biosynthesis; L-histidine from 5-phospho-alpha-D-ribose 1-diphosphate: step 6/9. This Clostridium kluyveri (strain NBRC 12016) protein is Imidazoleglycerol-phosphate dehydratase.